The following is a 579-amino-acid chain: Laccase (579 aa).

A signal peptide (tat-type signal) is located at residues 1–31 (MTDWSRRRFLQTGAALGIAGTLPQTTTEVSA). Residues 82–214 (WGFDGSYPGP…AGLLGLYSIT (133 aa)) form the Plastocyanin-like 1 domain. Cu cation is bound by residues His145, His147, His192, and His194. The interval 372 to 401 (VSDPSTPPEDASADPTSLSLPTPASYDESD) is disordered. A Plastocyanin-like 2 domain is found at 423–530 (LNGHVFGDED…NKMMIPFVVE (108 aa)). The N-linked (GlcNAc...) asparagine glycan is linked to Asn449. Residues His455, His458, His460, His512, Cys513, His514, His518, and Met523 each contribute to the Cu cation site. The N-linked (GlcNAc...) asparagine glycan is linked to Asn557.

The protein belongs to the multicopper oxidase family. Cu(2+) serves as cofactor. Exported by the Tat system. In terms of processing, glycosylated.

The protein resides in the secreted. The catalysed reaction is 4 hydroquinone + O2 = 4 benzosemiquinone + 2 H2O. Its activity is regulated as follows. Inhibited by 1 mM NaN(3), 10 mM thiourea, 10 mM 1,10-phenanthroline, 0.1 mM DL-dithiothreitol (DTT) and 1 mM L-cysteine. The inhibition by DTT and L-cysteine is likely caused by reduction of the oxidized substrate and not by inhibition of the enzyme. Catalyzes the oxidation of a wide variety of organic substrates, including bilirubin, syringaldazine (SGZ), 2,2'-azino-di-(3-ethylbenzothiazoline)-6-sulfonic acid (ABTS) and dimethoxyphenol (DMP). No oxidation of Fe(2+) or guaiacol. The sequence is that of Laccase (lccA) from Haloferax volcanii (strain ATCC 29605 / DSM 3757 / JCM 8879 / NBRC 14742 / NCIMB 2012 / VKM B-1768 / DS2) (Halobacterium volcanii).